Reading from the N-terminus, the 93-residue chain is Neurophysin 1 (93 aa).

7 cysteine pairs are disulfide-bonded: C10–C54, C13–C27, C21–C44, C28–C34, C61–C74, C68–C86, and C75–C80.

The protein belongs to the vasopressin/oxytocin family.

In terms of biological role, neurophysin 1 specifically binds oxytocin. In Struthio camelus (Common ostrich), this protein is Neurophysin 1.